The primary structure comprises 483 residues: Succinate semialdehyde dehydrogenase (483 aa).

Residues 156–157 (WN), 180–183 (KPAP), and 233–234 (GS) contribute to the NAD(+) site. Catalysis depends on E255, which acts as the Proton acceptor. L256 provides a ligand contact to NAD(+). The active-site Nucleophile is C289. E386 provides a ligand contact to NAD(+).

This sequence belongs to the aldehyde dehydrogenase family. In terms of assembly, homotetramer.

It catalyses the reaction succinate semialdehyde + NAD(+) + H2O = succinate + NADH + 2 H(+). Its function is as follows. Involved in the degradation of the pyridine ring of trigonelline (TG; N-methylnicotinate) into succinate and methylamine as carbon and nitrogen sources, respectively. Catalyzes the NAD(+)-dependent oxidation of succinate semialdehyde to succinate. The chain is Succinate semialdehyde dehydrogenase from Acinetobacter baylyi (strain ATCC 33305 / BD413 / ADP1).